The following is a 338-amino-acid chain: Phenylalanine--tRNA ligase alpha subunit (338 aa).

Glu-253 lines the Mg(2+) pocket.

It belongs to the class-II aminoacyl-tRNA synthetase family. Phe-tRNA synthetase alpha subunit type 1 subfamily. As to quaternary structure, tetramer of two alpha and two beta subunits. Mg(2+) is required as a cofactor.

The protein localises to the cytoplasm. It carries out the reaction tRNA(Phe) + L-phenylalanine + ATP = L-phenylalanyl-tRNA(Phe) + AMP + diphosphate + H(+). This Geotalea daltonii (strain DSM 22248 / JCM 15807 / FRC-32) (Geobacter daltonii) protein is Phenylalanine--tRNA ligase alpha subunit.